The primary structure comprises 230 residues: Leucyl/phenylalanyl-tRNA--protein transferase (230 aa).

Belongs to the L/F-transferase family.

Its subcellular location is the cytoplasm. The enzyme catalyses N-terminal L-lysyl-[protein] + L-leucyl-tRNA(Leu) = N-terminal L-leucyl-L-lysyl-[protein] + tRNA(Leu) + H(+). It carries out the reaction N-terminal L-arginyl-[protein] + L-leucyl-tRNA(Leu) = N-terminal L-leucyl-L-arginyl-[protein] + tRNA(Leu) + H(+). The catalysed reaction is L-phenylalanyl-tRNA(Phe) + an N-terminal L-alpha-aminoacyl-[protein] = an N-terminal L-phenylalanyl-L-alpha-aminoacyl-[protein] + tRNA(Phe). Its function is as follows. Functions in the N-end rule pathway of protein degradation where it conjugates Leu, Phe and, less efficiently, Met from aminoacyl-tRNAs to the N-termini of proteins containing an N-terminal arginine or lysine. The protein is Leucyl/phenylalanyl-tRNA--protein transferase of Proteus mirabilis (strain HI4320).